We begin with the raw amino-acid sequence, 136 residues long: Large ribosomal subunit protein eL27 (136 aa).

Belongs to the eukaryotic ribosomal protein eL27 family.

The chain is Large ribosomal subunit protein eL27 (RPL27) from Candida albicans (Yeast).